A 108-amino-acid polypeptide reads, in one-letter code: MMIKKKAAFSEYRDLEQSYMQLNHCLKKFHQIRAKVSQQLAERAESPKNSRETESILHNLFPQGVAGVNQEAEKDLKKIVSLFKQLEVRLKQLNAQAPVEIPSGKTKR.

Residues 69–97 adopt a coiled-coil conformation; sequence NQEAEKDLKKIVSLFKQLEVRLKQLNAQA.

As to quaternary structure, binds to SseB and SseD.

The protein localises to the cytoplasm. Functions as a type III secretion system (T3SS) chaperone, which is required for SseB and SseD accumulation and secretion. May have a direct role in secretion of SseB and SseD, or may facilitate their correct folding, for efficient secretion and function. Required for survival and replication within epithelial cells and macrophages. The polypeptide is Type III secretion system chaperone SseA (sseA) (Salmonella typhimurium (strain LT2 / SGSC1412 / ATCC 700720)).